The chain runs to 341 residues: Glycerol-3-phosphate dehydrogenase [NAD(P)+] (341 aa).

Residues S14, F15, R35, and K108 each coordinate NADPH. Residues K108 and G136 each contribute to the sn-glycerol 3-phosphate site. S140 is an NADPH binding site. Sn-glycerol 3-phosphate is bound by residues K191, D244, S254, R255, and N256. K191 acts as the Proton acceptor in catalysis. R255 serves as a coordination point for NADPH. Residues V279 and E281 each coordinate NADPH.

Belongs to the NAD-dependent glycerol-3-phosphate dehydrogenase family.

It is found in the cytoplasm. The catalysed reaction is sn-glycerol 3-phosphate + NAD(+) = dihydroxyacetone phosphate + NADH + H(+). It carries out the reaction sn-glycerol 3-phosphate + NADP(+) = dihydroxyacetone phosphate + NADPH + H(+). Its pathway is membrane lipid metabolism; glycerophospholipid metabolism. In terms of biological role, catalyzes the reduction of the glycolytic intermediate dihydroxyacetone phosphate (DHAP) to sn-glycerol 3-phosphate (G3P), the key precursor for phospholipid synthesis. This Pseudomonas putida (strain GB-1) protein is Glycerol-3-phosphate dehydrogenase [NAD(P)+].